Here is a 176-residue protein sequence, read N- to C-terminus: MGDPRKSKKKWMGPSHPWIKINLGKEQILIGKYGLRNKKEIWIAQTMIRNFRHQARSLLALPPAERNIREKQLIQKLYRMGILEKDNSTLDDILSLTEENYLERRLQTIVYKKGLARTIYQARQLITHGHIAISGRKVTSPGYVVLRGEEDLIDYYPTSPFKQNPPSQGEVNVEQA.

The S4 RNA-binding domain maps to 104-166; it reads RRLQTIVYKK…PTSPFKQNPP (63 aa).

It belongs to the universal ribosomal protein uS4 family. Part of the 30S ribosomal subunit. Contacts protein S5. The interaction surface between S4 and S5 is involved in control of translational fidelity.

One of the primary rRNA binding proteins, it binds directly to 16S rRNA where it nucleates assembly of the body of the 30S subunit. Its function is as follows. With S5 and S12 plays an important role in translational accuracy. This Sulfolobus acidocaldarius (strain ATCC 33909 / DSM 639 / JCM 8929 / NBRC 15157 / NCIMB 11770) protein is Small ribosomal subunit protein uS4 (rps4).